The primary structure comprises 126 residues: Large ribosomal subunit protein bL12 (126 aa).

It belongs to the bacterial ribosomal protein bL12 family. Homodimer. Part of the ribosomal stalk of the 50S ribosomal subunit. Forms a multimeric L10(L12)X complex, where L10 forms an elongated spine to which 2 to 4 L12 dimers bind in a sequential fashion. Binds GTP-bound translation factors.

Forms part of the ribosomal stalk which helps the ribosome interact with GTP-bound translation factors. Is thus essential for accurate translation. The protein is Large ribosomal subunit protein bL12 of Chlorobaculum parvum (strain DSM 263 / NCIMB 8327) (Chlorobium vibrioforme subsp. thiosulfatophilum).